Reading from the N-terminus, the 835-residue chain is Protein P (835 aa).

Residues 1–176 (MPLSYQHFRK…FFGTPYTWEH (176 aa)) form a terminal protein domain (TP) region. The interval 177–334 (KLQHGTQPVN…HCLHHIVKLL (158 aa)) is spacer. 2 disordered regions span residues 211–235 (LGQKSKQGPLATSPRHGSGGLWSRT) and 258–288 (RHPSSSINQSRQRKETNTSYSSSERHSPTSH). The tract at residues 335-680 (DDWGPCQHHG…YMHLYPVARQ (346 aa)) is polymerase/reverse transcriptase domain (RT). In terms of domain architecture, Reverse transcriptase spans 345–590 (HHFIRIPRTP…KALNFMGYVI (246 aa)). 3 residues coordinate Mg(2+): D417, D541, and D542.

The protein belongs to the hepadnaviridae P protein family.

It catalyses the reaction DNA(n) + a 2'-deoxyribonucleoside 5'-triphosphate = DNA(n+1) + diphosphate. The catalysed reaction is Endonucleolytic cleavage to 5'-phosphomonoester.. Its activity is regulated as follows. Activated by host HSP70 and HSP40 in vitro to be able to bind the epsilon loop of the pgRNA. Because deletion of the RNase H region renders the protein partly chaperone-independent, the chaperones may be needed indirectly to relieve occlusion of the RNA-binding site by this domain. Inhibited by several reverse-transcriptase inhibitors: Lamivudine, Adefovir and Entecavir. Multifunctional enzyme that converts the viral RNA genome into dsDNA in viral cytoplasmic capsids. This enzyme displays a DNA polymerase activity that can copy either DNA or RNA templates, and a ribonuclease H (RNase H) activity that cleaves the RNA strand of RNA-DNA heteroduplexes in a partially processive 3'- to 5'-endonucleasic mode. Neo-synthesized pregenomic RNA (pgRNA) are encapsidated together with the P protein, and reverse-transcribed inside the nucleocapsid. Initiation of reverse-transcription occurs first by binding the epsilon loop on the pgRNA genome, and is initiated by protein priming, thereby the 5'-end of (-)DNA is covalently linked to P protein. Partial (+)DNA is synthesized from the (-)DNA template and generates the relaxed circular DNA (RC-DNA) genome. After budding and infection, the RC-DNA migrates in the nucleus, and is converted into a plasmid-like covalently closed circular DNA (cccDNA). The activity of P protein does not seem to be necessary for cccDNA generation, and is presumably released from (+)DNA by host nuclear DNA repair machinery. This is Protein P from Woolly monkey hepatitis B virus (isolate Louisville) (WMHBV).